The primary structure comprises 170 residues: Peptide deformylase (170 aa).

Residues Cys-91 and His-133 each contribute to the Fe cation site. The active site involves Glu-134. His-137 lines the Fe cation pocket.

This sequence belongs to the polypeptide deformylase family. The cofactor is Fe(2+).

It catalyses the reaction N-terminal N-formyl-L-methionyl-[peptide] + H2O = N-terminal L-methionyl-[peptide] + formate. In terms of biological role, removes the formyl group from the N-terminal Met of newly synthesized proteins. Requires at least a dipeptide for an efficient rate of reaction. N-terminal L-methionine is a prerequisite for activity but the enzyme has broad specificity at other positions. The polypeptide is Peptide deformylase (Yersinia enterocolitica serotype O:8 / biotype 1B (strain NCTC 13174 / 8081)).